Reading from the N-terminus, the 973-residue chain is UvrABC system protein A (973 aa).

34–41 (GLSGSGKS) lines the ATP pocket. ABC transporter domains are found at residues 331 to 609 (WAKS…PKSL) and 629 to 958 (PKKG…HFLK). 662 to 669 (GVSGGGKS) contributes to the ATP binding site. A C4-type zinc finger spans residues 761–787 (CEACQGDGVIKIEMHFLPDVYVTCDVC).

It belongs to the ABC transporter superfamily. UvrA family. As to quaternary structure, forms a heterotetramer with UvrB during the search for lesions.

It is found in the cytoplasm. In terms of biological role, the UvrABC repair system catalyzes the recognition and processing of DNA lesions. UvrA is an ATPase and a DNA-binding protein. A damage recognition complex composed of 2 UvrA and 2 UvrB subunits scans DNA for abnormalities. When the presence of a lesion has been verified by UvrB, the UvrA molecules dissociate. The protein is UvrABC system protein A of Agrobacterium fabrum (strain C58 / ATCC 33970) (Agrobacterium tumefaciens (strain C58)).